Reading from the N-terminus, the 84-residue chain is U4-theraphotoxin-Hhn1ac (84 aa).

The first 22 residues, 1–22, serve as a signal peptide directing secretion; the sequence is MKVTLIAILTCAAVLVLHTTAA. A propeptide spanning residues 23-47 is cleaved from the precursor; the sequence is EELEESQLMEVGMPDTELAAVDEER. 3 cysteine pairs are disulfide-bonded: cysteine 51–cysteine 65, cysteine 55–cysteine 76, and cysteine 70–cysteine 81.

The protein belongs to the neurotoxin 12 (Hwtx-2) family. 02 (Hwtx-2) subfamily. In terms of tissue distribution, expressed by the venom gland.

The protein resides in the secreted. Postsynaptic neurotoxin. The chain is U4-theraphotoxin-Hhn1ac from Cyriopagopus hainanus (Chinese bird spider).